Reading from the N-terminus, the 149-residue chain is Nucleoside diphosphate kinase (149 aa).

ATP is bound by residues Lys-9, Phe-57, Arg-85, Thr-91, Arg-102, and Asn-112. Residue His-115 is the Pros-phosphohistidine intermediate of the active site.

It belongs to the NDK family. Mg(2+) serves as cofactor.

It localises to the cytoplasm. It catalyses the reaction a 2'-deoxyribonucleoside 5'-diphosphate + ATP = a 2'-deoxyribonucleoside 5'-triphosphate + ADP. It carries out the reaction a ribonucleoside 5'-diphosphate + ATP = a ribonucleoside 5'-triphosphate + ADP. Functionally, major role in the synthesis of nucleoside triphosphates other than ATP. The ATP gamma phosphate is transferred to the NDP beta phosphate via a ping-pong mechanism, using a phosphorylated active-site intermediate. This chain is Nucleoside diphosphate kinase, found in Methanoculleus marisnigri (strain ATCC 35101 / DSM 1498 / JR1).